The primary structure comprises 398 residues: Acetate kinase (398 aa).

Asn-9 provides a ligand contact to Mg(2+). Lys-16 contributes to the ATP binding site. Arg-93 is a substrate binding site. Asp-150 functions as the Proton donor/acceptor in the catalytic mechanism. Residues 209–213, 284–286, and 329–333 contribute to the ATP site; these read HLGAG, DMR, and GIGEH. Residue Glu-382 coordinates Mg(2+).

The protein belongs to the acetokinase family. Homodimer. It depends on Mg(2+) as a cofactor. Mn(2+) is required as a cofactor.

The protein resides in the cytoplasm. The enzyme catalyses acetate + ATP = acetyl phosphate + ADP. It functions in the pathway metabolic intermediate biosynthesis; acetyl-CoA biosynthesis; acetyl-CoA from acetate: step 1/2. Functionally, catalyzes the formation of acetyl phosphate from acetate and ATP. Can also catalyze the reverse reaction. The chain is Acetate kinase from Rhodopseudomonas palustris (strain TIE-1).